A 910-amino-acid polypeptide reads, in one-letter code: MTIPNSDFMIENGVCDFPTTPEEEKRIVSELITESEDNLKEGNLYFVISKRWYTSWEKYVEQSTKEYISGESSEASRPGPIDNHDIIESESDVNDPQLRRLLMERVDYVLVPQEVWKRLVEWYSGGPPIERKLICQGFYTRSYSVEVYPLCLMLTDGRDESRTVIRLGKQASIRELYEKVCALTGVPQEKAHIWDYFDKRKNGLLDSLSYKSLEESSLHMDQDILLEVDGSSSSQSAMSSTGNELALVPLEPSRSSVTIAGGPTLSNGHSTTSNFSLFPRITSEDDGSNSLSILGKGEKGGLAGLSNLGNTCFMNSALQCLAHTPPIVEYFLQDYSDDINRDNPLGMCGELAIAFGDLLKKLWSSGRNSVAPRAFKTKLARFAPQFSGYNQHDSQELLAFLLDGLHEDLNKVKRKPYIELKDSDSRPDDEVAEELWNYHKARNDSVIVDVCQGQYKSTLVCPACGKISITFDPFMYLSVPLPSTLTRSMTVTVFYCDGSHLPMPYTVIVPKNGSIRDLITALGTACLLAEDESLLLAEVYDHKIFKYFENPLDSLSSIKDDEHIVAYRLNQMPKGSGKAKLEILHGGQKRPILESVRGRDVKLFGTPFVTYVNTEPLSGADIDAVLSRFLSPLHKVHAPSKIHNGSENGHLPDATVDEASEILSSPDTEIDDASDRELSFRIFLTDERGLNFKPLQSESSISLGIATRVLVEWNEGEHERYDSSYLSDLPEVHKTSFSAKKTRQESISLFSCLEAFLAEEPLGPDDMWFCPSCKEHRQANKKLDLWKLPDILVFHLKRFTYSRYLKNKIDTFVNFPVHDLDLSKYVKNKNDQSYLYELYAVSNHYGGLGGGHYTAYAKLIDDNEWYHFDDSHVSSVNESEIKNSAAYVLFYRRVRSETETQTVEMSTDMD.

Positions 19-134 (TTPEEEKRIV…GGPPIERKLI (116 aa)) constitute a DUSP domain. The interval 68–89 (ISGESSEASRPGPIDNHDIIES) is disordered. The 592-residue stretch at 303–894 (AGLSNLGNTC…AAYVLFYRRV (592 aa)) folds into the USP domain. Cys-312 acts as the Nucleophile in catalysis. His-852 functions as the Proton acceptor in the catalytic mechanism.

Belongs to the peptidase C19 family.

The catalysed reaction is Thiol-dependent hydrolysis of ester, thioester, amide, peptide and isopeptide bonds formed by the C-terminal Gly of ubiquitin (a 76-residue protein attached to proteins as an intracellular targeting signal).. Its function is as follows. Recognizes and hydrolyzes the peptide bond at the C-terminal Gly of ubiquitin. Involved in the processing of poly-ubiquitin precursors as well as that of ubiquitinated proteins. This Arabidopsis thaliana (Mouse-ear cress) protein is Ubiquitin carboxyl-terminal hydrolase 9 (UBP9).